Consider the following 319-residue polypeptide: RWD domain-containing protein 2B (319 aa).

The RWD domain maps to 41–165 (AELDLLASMF…EWVREHASGY (125 aa)). At Ser275 the chain carries Phosphoserine.

Ubiquitous.

This is RWD domain-containing protein 2B (RWDD2B) from Homo sapiens (Human).